A 467-amino-acid chain; its full sequence is Variant surface glycoprotein 7 (467 aa).

Positions T77–L87 are enriched in polar residues. A disordered region spans residues T77–L133. Residues N93–S103 show a composition bias toward basic residues. Polar residues predominate over residues P107 to S116. N108 and N252 each carry an N-linked (GlcNAc...) asparagine glycan. Residues A382 to A407 form a disordered region. N416 carries N-linked (GlcNAc...) asparagine glycosylation. D444 carries GPI-anchor amidated aspartate lipidation. Positions S445–F467 are cleaved as a propeptide — removed in mature form.

The protein resides in the cell membrane. Functionally, VSG forms a coat on the surface of the parasite. The trypanosome evades the immune response of the host by expressing a series of antigenically distinct VSGs from an estimated 1000 VSG genes. The sequence is that of Variant surface glycoprotein 7 from Trypanosoma brucei rhodesiense.